The primary structure comprises 171 residues: uncharacterized protein (171 aa).

An N-terminal signal peptide occupies residues 1–24 (MIFDSLTMTQSSLSLLLLTGAIFS). At 25–70 (ISALYLTLFHRCATFSATSDLFLLVPLKFVSRDINDRLKTHYHHSC) the chain is on the extracellular side. Residues 71 to 91 (LGSPFLCIIFLFISPLLNYHF) traverse the membrane as a helical segment. The Cytoplasmic segment spans residues 92–140 (RSLVRPPKIHQKGSIPTLTKNAETRCSHHLKQAAATGEVCKVVVIIKGH). The helical transmembrane segment at 141 to 161 (ILKDCSIFFFIIFPLIYPLFI) threads the bilayer. The Extracellular portion of the chain corresponds to 162–171 (NCSSKYNGLQ).

It localises to the membrane. This is an uncharacterized protein from Saccharomyces cerevisiae (strain ATCC 204508 / S288c) (Baker's yeast).